Here is a 325-residue protein sequence, read N- to C-terminus: Myo-inositol dehydrogenase Hyg17 (325 aa).

The protein belongs to the Gfo/Idh/MocA family.

The enzyme catalyses myo-inositol + NAD(+) = myo-inosose-5 + NADH + H(+). The protein operates within antibiotic biosynthesis. Dehydrogenase involved in the biosynthesis of the aminocyclitol moiety of hygromycin A, a broad-spectrum antibiotic. Catalyzes the NAD(+)-dependent oxidation of myo-inositol to myo-inosose-5 (neo-inosose). Shows reduced activity with scyllo-inositol, minimal activity with L-chiro-inositol and no activity with D-glucose, D-chiro-inositol, epi-inositol, muco-inositol and allo-inositol. Is specific for NAD(+) and cannot use NADP(+). The chain is Myo-inositol dehydrogenase Hyg17 from Streptomyces leeuwenhoekii.